Here is a 145-residue protein sequence, read N- to C-terminus: Transcription antitermination protein NusB (145 aa).

This sequence belongs to the NusB family.

Functionally, involved in transcription antitermination. Required for transcription of ribosomal RNA (rRNA) genes. Binds specifically to the boxA antiterminator sequence of the ribosomal RNA (rrn) operons. In Aromatoleum aromaticum (strain DSM 19018 / LMG 30748 / EbN1) (Azoarcus sp. (strain EbN1)), this protein is Transcription antitermination protein NusB.